We begin with the raw amino-acid sequence, 730 residues long: MTANSSRRRLQMKSPRTDGDEKEEDYGLPDFHTRFINDEDLEEFEKALNAPQALSLIAINDWRPIHRRVRKPGKLPKVPQRTKDETREGVVYTLLKWPFLLFVLSWIVFLGALYILTRLYISLYEHFFAWTGQRQRLRRALHSTVDYQHWKNAAKELDEYLGNDAWKERPQYAYYDNTTVMTVVSQLRQLRAQTEAGGINGKAAAEELCTLLEGCIKTNFAGIENPRLYSETYYGTKDLVQEFIEEAHTSLRLVLTSQQLSDERKQGLFRHLDTNFGRTVLCLSGGATLAYYHFGVIKALLDNDVLPDIISGTSGGALVAALVATRTDEELKKLLVPELAHKIKACQDGITTWAVRCWRTGARFDVMQWAEQCSWFCRGSTTFREAYERTGRVLNVSCVPSDPHSPTILANYLTSPNCVIWSAVLASAAVPGILNPVVLMMKKPDGTLAPYSFGHKWKDGSLRTDIPLKALDVHFNASFSIVSQVNPHISLFFFSSRGSVGRPVTHRKGRGWRGGFLGSALEQYIKLDLNKWLKVMRHLELLPRPLGQDWSEIWLQRFSGTVTIWPKSVLSDLYYILSDPSVQRLARMLHEGQQCTFPKIKFISNRMKIERVIAEGLMKDPEWAGSGRWNNVPFRSRTDQTLPLEENAQQRSASMLADTMSHLRDTGHFREAPTSHPTGSPVRPTSGRRNSLMEEIRRQSAVFFDDTDDTMPSDDEKFPYQGQSSGTKIG.

Positions 1-11 are enriched in basic residues; it reads MTANSSRRRLQ. Residues 1-26 form a disordered region; it reads MTANSSRRRLQMKSPRTDGDEKEEDY. Residues 97–117 form a helical membrane-spanning segment; the sequence is WPFLLFVLSWIVFLGALYILT. The region spanning 281-472 is the PNPLA domain; sequence LCLSGGATLA…RTDIPLKALD (192 aa). A GXSXG motif is present at residues 312-316; it reads GTSGG. S314 (nucleophile) is an active-site residue. Catalysis depends on D459, which acts as the Proton acceptor. Positions 667–730 are disordered; it reads GHFREAPTSH…QGQSSGTKIG (64 aa). A compositionally biased stretch (polar residues) spans 721-730; that stretch reads QGQSSGTKIG.

Belongs to the PLPL family.

Its subcellular location is the membrane. In terms of biological role, probable lipid hydrolase. The polypeptide is Patatin-like phospholipase domain-containing protein CIMG_04897 (Coccidioides immitis (strain RS) (Valley fever fungus)).